Consider the following 548-residue polypeptide: Transcriptional adapter ADA2a (548 aa).

Residues 1-30 (MGRSKLASRPAEEDLNPGKSKRKKISLGPE) are disordered. The ZZ-type zinc-finger motif lies at 48-104 (PGLYCCNYCDKDLSGLVRFKCAVCMDFDLCVECFSVGVELNRHKNSHPYRVMDNLSF). Zn(2+) contacts are provided by cysteine 53, cysteine 56, cysteine 68, cysteine 71, cysteine 77, cysteine 80, histidine 90, and histidine 94. An SANT domain is found at 106–158 (LVTSDWNADEEILLLEAIATYGFGNWKEVADHVGSKTTTECIKHFNSAYMQSP). Lysine 257 carries the N6-acetyllysine; by GCN5 modification. Residues 365-386 (QSKEEHKELIKKVIEEHQILRR) adopt a coiled-coil conformation. An SWIRM domain is found at 461-548 (PRIYSGLDTW…LVHKGIGDST (88 aa)).

Interacts in vitro with the HAT domain of GCN5 and with the DNA-binding domain of the transcriptional activator DREB1B/CBF1. Acetylated in vitro by GCN5, but acetylation is not essential for biological activity. As to expression, expressed in roots and leaves.

The protein resides in the nucleus. Functionally, required for the function of some acidic activation domains, which activate transcription from a distant site. The exact mechanism of action is not yet known. ADA2 stimulates the acetyltransferase activity of GCN5 on free histones or nucleosomes, probably by opening up the promoter region. The sequence is that of Transcriptional adapter ADA2a (ADA2A) from Arabidopsis thaliana (Mouse-ear cress).